The following is a 156-amino-acid chain: Phytohormone-binding protein (156 aa).

Glutamine 22, glutamine 68, and threonine 141 together coordinate gibberellin A3.

It belongs to the BetVI family.

Functionally, binds gibberellin A3 (GA3) in vitro. The protein is Phytohormone-binding protein of Medicago truncatula (Barrel medic).